The primary structure comprises 59 residues: Single-pass membrane and coiled-coil domain-containing protein 4 (59 aa).

Positions 1–23 (MRQLKGKPKKETSKDKRERKQAM) are disordered. Positions 9–23 (KKETSKDKRERKQAM) are enriched in basic and acidic residues. Positions 9–30 (KKETSKDKRERKQAMQDARKQV) form a coiled coil. A helical transmembrane segment spans residues 32-52 (TVVLPTVAVVVLLIVFFVYAA).

It belongs to the SMCO4 family.

Its subcellular location is the membrane. The protein is Single-pass membrane and coiled-coil domain-containing protein 4 (smco4) of Takifugu rubripes (Japanese pufferfish).